We begin with the raw amino-acid sequence, 92 residues long: MPKKDIQPKYFEEAKFICTTCANEFICGTTKREEMRIDVCSNCHPFFSGAQNFANTTGRVEQFKSKFARKEAINATAQKNSEDQKSKNKENK.

The protein belongs to the bacterial ribosomal protein bL31 family. Type A subfamily. As to quaternary structure, part of the 50S ribosomal subunit.

Its function is as follows. Binds the 23S rRNA. The protein is Large ribosomal subunit protein bL31 of Mesoplasma florum (strain ATCC 33453 / NBRC 100688 / NCTC 11704 / L1) (Acholeplasma florum).